The chain runs to 633 residues: Replication protein E1 (633 aa).

Residues 84–86 carry the Nuclear localization signal motif; sequence KRK. Phosphoserine; by host occurs at positions 90, 94, and 108. The short motif at 107–116 is the Nuclear export signal element; the sequence is LSPRLGAISL. Positions 148–168 are disordered; the sequence is NTEGTDETETDQVQTVSGETT. The span at 158–168 shows a compositional bias: polar residues; that stretch reads DQVQTVSGETT. The interval 169-335 is DNA-binding region; it reads TDSLGRQQIT…QTVIEYSLAD (167 aa). The SF3 helicase domain occupies 434–584; the sequence is VDFISFMIAL…FPFDSNGNPV (151 aa). 460–467 provides a ligand contact to ATP; it reads GPPDTGKS. K541 participates in a covalent cross-link: Glycyl lysine isopeptide (Lys-Gly) (interchain with G-Cter in SUMO). Residues 609–633 are disordered; the sequence is DNEEEENGDPSNTFRCVPGKASRPI.

The protein belongs to the papillomaviridae E1 protein family. In terms of assembly, can form hexamers. Interacts with E2 protein; this interaction increases E1 DNA binding specificity. Interacts with host DNA polymerase subunit POLA2. Interacts with host single stranded DNA-binding protein RPA1. Interacts with host TOP1; this interaction stimulates the enzymatic activity of TOP1. Post-translationally, phosphorylated. Sumoylated.

Its subcellular location is the host nucleus. It catalyses the reaction Couples ATP hydrolysis with the unwinding of duplex DNA by translocating in the 3'-5' direction.. The enzyme catalyses ATP + H2O = ADP + phosphate + H(+). In terms of biological role, ATP-dependent DNA 3'-5' helicase required for initiation of viral DNA replication. It forms a complex with the viral E2 protein. The E1-E2 complex binds to the replication origin which contains binding sites for both proteins. During the initial step, a dimer of E1 interacts with a dimer of protein E2 leading to a complex that binds the viral origin of replication with high specificity. Then, a second dimer of E1 displaces the E2 dimer in an ATP-dependent manner to form the E1 tetramer. Following this, two E1 monomers are added to each half of the site, which results in the formation of two E1 trimers on the viral ori. Subsequently, two hexamers will be created. The double hexamer acts as a bi-directional helicase machinery and unwinds the viral DNA and then recruits the host DNA polymerase to start replication. The sequence is that of Replication protein E1 from Homo sapiens (Human).